The following is a 64-amino-acid chain: Large ribosomal subunit protein uL30 (64 aa).

This sequence belongs to the universal ribosomal protein uL30 family. In terms of assembly, part of the 50S ribosomal subunit.

The polypeptide is Large ribosomal subunit protein uL30 (Syntrophus aciditrophicus (strain SB)).